We begin with the raw amino-acid sequence, 315 residues long: DNA-directed RNA polymerase subunit alpha (315 aa).

The alpha N-terminal domain (alpha-NTD) stretch occupies residues 1–228 (MIGMEKPKIE…EHLELFISLT (228 aa)). Residues 245-315 (RNKLMEMTIE…FGLSLRQPDD (71 aa)) form an alpha C-terminal domain (alpha-CTD) region.

This sequence belongs to the RNA polymerase alpha chain family. As to quaternary structure, homodimer. The RNAP catalytic core consists of 2 alpha, 1 beta, 1 beta' and 1 omega subunit. When a sigma factor is associated with the core the holoenzyme is formed, which can initiate transcription.

It carries out the reaction RNA(n) + a ribonucleoside 5'-triphosphate = RNA(n+1) + diphosphate. Its function is as follows. DNA-dependent RNA polymerase catalyzes the transcription of DNA into RNA using the four ribonucleoside triphosphates as substrates. This chain is DNA-directed RNA polymerase subunit alpha, found in Symbiobacterium thermophilum (strain DSM 24528 / JCM 14929 / IAM 14863 / T).